The sequence spans 223 residues: Phosphoribosylformylglycinamidine synthase subunit PurQ (223 aa).

The Glutamine amidotransferase type-1 domain maps to 3 to 223; the sequence is SAVILLPGLN…LFAGALGITA (221 aa). C87 serves as the catalytic Nucleophile. Active-site residues include H197 and E199.

Part of the FGAM synthase complex composed of 1 PurL, 1 PurQ and 2 PurS subunits.

It localises to the cytoplasm. It catalyses the reaction N(2)-formyl-N(1)-(5-phospho-beta-D-ribosyl)glycinamide + L-glutamine + ATP + H2O = 2-formamido-N(1)-(5-O-phospho-beta-D-ribosyl)acetamidine + L-glutamate + ADP + phosphate + H(+). The catalysed reaction is L-glutamine + H2O = L-glutamate + NH4(+). It functions in the pathway purine metabolism; IMP biosynthesis via de novo pathway; 5-amino-1-(5-phospho-D-ribosyl)imidazole from N(2)-formyl-N(1)-(5-phospho-D-ribosyl)glycinamide: step 1/2. Its function is as follows. Part of the phosphoribosylformylglycinamidine synthase complex involved in the purines biosynthetic pathway. Catalyzes the ATP-dependent conversion of formylglycinamide ribonucleotide (FGAR) and glutamine to yield formylglycinamidine ribonucleotide (FGAM) and glutamate. The FGAM synthase complex is composed of three subunits. PurQ produces an ammonia molecule by converting glutamine to glutamate. PurL transfers the ammonia molecule to FGAR to form FGAM in an ATP-dependent manner. PurS interacts with PurQ and PurL and is thought to assist in the transfer of the ammonia molecule from PurQ to PurL. The sequence is that of Phosphoribosylformylglycinamidine synthase subunit PurQ from Brucella abortus biovar 1 (strain 9-941).